We begin with the raw amino-acid sequence, 36 residues long: IGGFECNEHEHRSLVYLYNSAGFFCAGTLLNHEWVV.

The Peptidase S1 domain occupies 1–36 (IGGFECNEHEHRSLVYLYNSAGFFCAGTLLNHEWVV).

It belongs to the peptidase S1 family. Snake venom subfamily. As to quaternary structure, monomer. Expressed by the venom gland.

The protein localises to the secreted. Thrombin-like snake venom serine protease. Shows strong hydrolytic activity towards Boc-Asp(oBzl)-Pro-Arg-MCA, a synthetic substrate for thrombin. This Naja naja (Indian cobra) protein is Thrombin-like enzyme TLP.